The sequence spans 346 residues: Ribosomal RNA small subunit methyltransferase H (346 aa).

Residues 46 to 48 (GGY), aspartate 63, phenylalanine 90, aspartate 113, and glutamine 120 contribute to the S-adenosyl-L-methionine site. A disordered region spans residues 270-346 (GGSAGSRHMP…LPETNELARS (77 aa)).

It belongs to the methyltransferase superfamily. RsmH family.

The protein resides in the cytoplasm. It catalyses the reaction cytidine(1402) in 16S rRNA + S-adenosyl-L-methionine = N(4)-methylcytidine(1402) in 16S rRNA + S-adenosyl-L-homocysteine + H(+). Specifically methylates the N4 position of cytidine in position 1402 (C1402) of 16S rRNA. The protein is Ribosomal RNA small subunit methyltransferase H of Brucella abortus (strain S19).